The primary structure comprises 301 residues: MKRDIISVYDMKDDLEDIIELSIKLKKDRTIKFSEKKILAMIFEKPSTRTRNSLEVAMEQLNGHAIYLNPNDMQIGRGETIADTARVLSRFVDIISYRAFNHDDVVELARHATVPVLNALDNLEHPMQIVADFMTVYEKKHRLKGLKLAYIGDGNNMANSLLLGSSILGVDISIACPKGFEPNKEILRQAREISLKTGNKIEITDDPRIAVEASDIIYTDVWVSMGEENERENKERIFMPYQVNEDLTENANRDYIFMHCLPAHRGLEVTAGVIDGIHSVVFDEAENRIYSEKGIIYKLLS.

Carbamoyl phosphate is bound by residues 47–50 (STRT), glutamine 74, arginine 98, and 125–128 (HPMQ). Residues asparagine 156, aspartate 220, and 224–225 (SM) each bind L-ornithine. Carbamoyl phosphate is bound by residues 260 to 261 (CL) and arginine 288.

It belongs to the aspartate/ornithine carbamoyltransferase superfamily. OTCase family.

The protein localises to the cytoplasm. It catalyses the reaction carbamoyl phosphate + L-ornithine = L-citrulline + phosphate + H(+). It participates in amino-acid biosynthesis; L-arginine biosynthesis; L-arginine from L-ornithine and carbamoyl phosphate: step 1/3. Functionally, reversibly catalyzes the transfer of the carbamoyl group from carbamoyl phosphate (CP) to the N(epsilon) atom of ornithine (ORN) to produce L-citrulline. This Picrophilus torridus (strain ATCC 700027 / DSM 9790 / JCM 10055 / NBRC 100828 / KAW 2/3) protein is Ornithine carbamoyltransferase.